Here is a 186-residue protein sequence, read N- to C-terminus: dCTP deaminase (186 aa).

107 to 112 is a dCTP binding site; sequence KSTYAR. Catalysis depends on Glu-133, which acts as the Proton donor/acceptor. Gln-152, Tyr-166, and Gln-176 together coordinate dCTP.

Belongs to the dCTP deaminase family. As to quaternary structure, homotrimer.

The enzyme catalyses dCTP + H2O + H(+) = dUTP + NH4(+). Its pathway is pyrimidine metabolism; dUMP biosynthesis; dUMP from dCTP (dUTP route): step 1/2. In terms of biological role, catalyzes the deamination of dCTP to dUTP. This chain is dCTP deaminase, found in Campylobacter concisus (strain 13826).